The chain runs to 177 residues: Large ribosomal subunit protein uL6 (177 aa).

The protein belongs to the universal ribosomal protein uL6 family. As to quaternary structure, part of the 50S ribosomal subunit.

In terms of biological role, this protein binds to the 23S rRNA, and is important in its secondary structure. It is located near the subunit interface in the base of the L7/L12 stalk, and near the tRNA binding site of the peptidyltransferase center. The protein is Large ribosomal subunit protein uL6 of Thioalkalivibrio sulfidiphilus (strain HL-EbGR7).